The chain runs to 390 residues: Chorismate synthase 1 (390 aa).

NADP(+) is bound by residues Arg39 and Arg45. The segment at 95–117 is disordered; sequence EQEEKEMKRKVTKPRPGHADLNG. FMN contacts are provided by residues 132 to 134, 253 to 254, Gly298, 313 to 317, and Arg339; these read RSS, NA, and KPIPT.

The protein belongs to the chorismate synthase family. Homotetramer. It depends on FMNH2 as a cofactor.

The enzyme catalyses 5-O-(1-carboxyvinyl)-3-phosphoshikimate = chorismate + phosphate. It participates in metabolic intermediate biosynthesis; chorismate biosynthesis; chorismate from D-erythrose 4-phosphate and phosphoenolpyruvate: step 7/7. Catalyzes the anti-1,4-elimination of the C-3 phosphate and the C-6 proR hydrogen from 5-enolpyruvylshikimate-3-phosphate (EPSP) to yield chorismate, which is the branch point compound that serves as the starting substrate for the three terminal pathways of aromatic amino acid biosynthesis. This reaction introduces a second double bond into the aromatic ring system. The protein is Chorismate synthase 1 of Bacillus cereus (strain ZK / E33L).